The following is a 1101-amino-acid chain: Protein unc-13 homolog (1101 aa).

The MHD1 domain occupies 663–804; the sequence is VSVFPAADSL…ASKDDLVPPV (142 aa). In terms of domain architecture, MHD2 spans 941 to 1051; that stretch reads QSRLEGLIEA…YETRELIDDL (111 aa).

Belongs to the unc-13 family. As to expression, expressed in roots, cotyledons, leaves, stems and flowers. Expressed in guard cells and mesophyll cells of leaves.

Its subcellular location is the cytoplasm. The protein resides in the cell membrane. Functionally, controls the tethering of the proton ATPase AHA1 to the plasma membrane. Is essential for stomatal opening in response to low concentration of carbon dioxide and light. The chain is Protein unc-13 homolog from Arabidopsis thaliana (Mouse-ear cress).